The primary structure comprises 266 residues: 3-methyl-2-oxobutanoate hydroxymethyltransferase (266 aa).

Asp45 and Asp84 together coordinate Mg(2+). Residues 45–46 (DS), Asp84, and Lys112 each bind 3-methyl-2-oxobutanoate. Glu114 is a Mg(2+) binding site. The active-site Proton acceptor is Glu181.

It belongs to the PanB family. Homodecamer; pentamer of dimers. The cofactor is Mg(2+).

Its subcellular location is the cytoplasm. The enzyme catalyses 3-methyl-2-oxobutanoate + (6R)-5,10-methylene-5,6,7,8-tetrahydrofolate + H2O = 2-dehydropantoate + (6S)-5,6,7,8-tetrahydrofolate. Its pathway is cofactor biosynthesis; (R)-pantothenate biosynthesis; (R)-pantoate from 3-methyl-2-oxobutanoate: step 1/2. In terms of biological role, catalyzes the reversible reaction in which hydroxymethyl group from 5,10-methylenetetrahydrofolate is transferred onto alpha-ketoisovalerate to form ketopantoate. This is 3-methyl-2-oxobutanoate hydroxymethyltransferase from Pseudomonas syringae pv. syringae (strain B728a).